The sequence spans 573 residues: (R)-mandelonitrile lyase 3 (573 aa).

Residues Met-1 to Ser-27 form the signal peptide. The N-linked (GlcNAc...) asparagine glycan is linked to Asn-30. Thr-63–Ala-64 lines the FAD pocket. An N-linked (GlcNAc...) asparagine glycan is attached at Asn-75. FAD contacts are provided by residues Glu-82–Arg-83, Val-129, Thr-133, and Asn-137–Val-140. Asn-145, Asn-150, Asn-162, and Asn-218 each carry an N-linked (GlcNAc...) asparagine glycan. Val-244 contributes to the FAD binding site. N-linked (GlcNAc...) asparagine glycans are attached at residues Asn-252, Asn-267, and Asn-309. Cys-356 is a binding site for substrate. Residues Asn-380, Asn-402, Asn-420, and Asn-467 are each glycosylated (N-linked (GlcNAc...) asparagine). Cys-427 and Cys-478 are joined by a disulfide. Tyr-485 provides a ligand contact to substrate. Residues Trp-486–His-487 and Gly-515 each bind FAD. The Proton donor role is filled by His-487. His-525 (proton acceptor) is an active-site residue. Pro-526–Gln-527 contributes to the FAD binding site.

This sequence belongs to the GMC oxidoreductase family. Monomer. It depends on FAD as a cofactor.

It is found in the vacuole. The protein resides in the aleurone grain. It carries out the reaction (R)-mandelonitrile = benzaldehyde + hydrogen cyanide. Functionally, involved in cyanogenesis, the release of HCN from injured tissues. Catalyzes the stereospecific addition of HCN to a variety of aldehydes in vitro. It is a major seed constituent, and could have the additional role of a storage form for reduced nitrogen. This chain is (R)-mandelonitrile lyase 3 (MDL3), found in Prunus serotina (Black cherry).